We begin with the raw amino-acid sequence, 141 residues long: MAKKVVGMIKLQLPAGKATPAPPVGPALGQHGVNIMAFCKEYNAKTANQAGMTIPVIISVYQDRSFSFILKTPPAAVLIKKAAGLDSGSGEPNKTKVGKITKAQLKEIAETKMPDLNAGSVESAMSMIAGTARSMGITVEE.

This sequence belongs to the universal ribosomal protein uL11 family. As to quaternary structure, part of the ribosomal stalk of the 50S ribosomal subunit. Interacts with L10 and the large rRNA to form the base of the stalk. L10 forms an elongated spine to which L12 dimers bind in a sequential fashion forming a multimeric L10(L12)X complex. One or more lysine residues are methylated.

Forms part of the ribosomal stalk which helps the ribosome interact with GTP-bound translation factors. The protein is Large ribosomal subunit protein uL11 of Clostridium novyi (strain NT).